We begin with the raw amino-acid sequence, 75 residues long: UPF0512 protein D (75 aa).

Residues 1 to 20 (MAIFKSISSISNSTGSMGSS) are disordered.

It belongs to the UPF0512 family.

The sequence is that of UPF0512 protein D from Dictyostelium discoideum (Social amoeba).